Consider the following 587-residue polypeptide: Arginine--tRNA ligase (587 aa).

Positions 127–137 match the 'HIGH' region motif; the sequence is PNLAKEMHVGH.

The protein belongs to the class-I aminoacyl-tRNA synthetase family. Monomer.

The protein resides in the cytoplasm. The enzyme catalyses tRNA(Arg) + L-arginine + ATP = L-arginyl-tRNA(Arg) + AMP + diphosphate. This Pseudomonas aeruginosa (strain ATCC 15692 / DSM 22644 / CIP 104116 / JCM 14847 / LMG 12228 / 1C / PRS 101 / PAO1) protein is Arginine--tRNA ligase.